Reading from the N-terminus, the 315-residue chain is Transaldolase (315 aa).

Catalysis depends on Lys-131, which acts as the Schiff-base intermediate with substrate.

Belongs to the transaldolase family. Type 1 subfamily. In terms of assembly, homodimer.

Its subcellular location is the cytoplasm. The enzyme catalyses D-sedoheptulose 7-phosphate + D-glyceraldehyde 3-phosphate = D-erythrose 4-phosphate + beta-D-fructose 6-phosphate. It participates in carbohydrate degradation; pentose phosphate pathway; D-glyceraldehyde 3-phosphate and beta-D-fructose 6-phosphate from D-ribose 5-phosphate and D-xylulose 5-phosphate (non-oxidative stage): step 2/3. Functionally, transaldolase is important for the balance of metabolites in the pentose-phosphate pathway. The sequence is that of Transaldolase from Actinobacillus pleuropneumoniae serotype 7 (strain AP76).